Here is a 270-residue protein sequence, read N- to C-terminus: Tryptophan synthase alpha chain (270 aa).

Catalysis depends on proton acceptor residues glutamate 49 and aspartate 60.

This sequence belongs to the TrpA family. As to quaternary structure, tetramer of two alpha and two beta chains.

It carries out the reaction (1S,2R)-1-C-(indol-3-yl)glycerol 3-phosphate + L-serine = D-glyceraldehyde 3-phosphate + L-tryptophan + H2O. The protein operates within amino-acid biosynthesis; L-tryptophan biosynthesis; L-tryptophan from chorismate: step 5/5. The alpha subunit is responsible for the aldol cleavage of indoleglycerol phosphate to indole and glyceraldehyde 3-phosphate. This is Tryptophan synthase alpha chain from Buchnera aphidicola subsp. Melaphis rhois.